Consider the following 294-residue polypeptide: Elongation factor Ts (294 aa).

The segment at 81–84 (TDFV) is involved in Mg(2+) ion dislocation from EF-Tu.

This sequence belongs to the EF-Ts family.

The protein localises to the cytoplasm. Associates with the EF-Tu.GDP complex and induces the exchange of GDP to GTP. It remains bound to the aminoacyl-tRNA.EF-Tu.GTP complex up to the GTP hydrolysis stage on the ribosome. The protein is Elongation factor Ts of Lawsonia intracellularis (strain PHE/MN1-00).